The chain runs to 145 residues: Putative pre-16S rRNA nuclease (145 aa).

It belongs to the YqgF nuclease family.

The protein localises to the cytoplasm. In terms of biological role, could be a nuclease involved in processing of the 5'-end of pre-16S rRNA. The polypeptide is Putative pre-16S rRNA nuclease (Limosilactobacillus fermentum (strain NBRC 3956 / LMG 18251) (Lactobacillus fermentum)).